Consider the following 240-residue polypeptide: Probable metal transport system ATP-binding protein TM_0124 (240 aa).

The 220-residue stretch at 4–223 folds into the ABC transporter domain; sequence VEVKNLTYRI…LKKIFTDFDI (220 aa). 36-43 is a binding site for ATP; sequence GPNGAGKT.

The protein belongs to the ABC transporter superfamily.

Part of an ATP-driven transport system TM_0123/TM_0124/TM_0125 for a metal. Probably responsible for energy coupling to the transport system. The protein is Probable metal transport system ATP-binding protein TM_0124 of Thermotoga maritima (strain ATCC 43589 / DSM 3109 / JCM 10099 / NBRC 100826 / MSB8).